The sequence spans 192 residues: Peptidyl-tRNA hydrolase (192 aa).

Position 14 (Y14) interacts with tRNA. H19 acts as the Proton acceptor in catalysis. Y64, N66, and N112 together coordinate tRNA.

It belongs to the PTH family. As to quaternary structure, monomer.

The protein localises to the cytoplasm. It catalyses the reaction an N-acyl-L-alpha-aminoacyl-tRNA + H2O = an N-acyl-L-amino acid + a tRNA + H(+). In terms of biological role, hydrolyzes ribosome-free peptidyl-tRNAs (with 1 or more amino acids incorporated), which drop off the ribosome during protein synthesis, or as a result of ribosome stalling. Its function is as follows. Catalyzes the release of premature peptidyl moieties from peptidyl-tRNA molecules trapped in stalled 50S ribosomal subunits, and thus maintains levels of free tRNAs and 50S ribosomes. In Anaeromyxobacter dehalogenans (strain 2CP-1 / ATCC BAA-258), this protein is Peptidyl-tRNA hydrolase.